The primary structure comprises 55 residues: Conotoxin Cal14.14 (55 aa).

The signal sequence occupies residues 1–20 (MFRLGVFLLTFLLLVSMATS). Disulfide bonds link Cys34/Cys48 and Cys38/Cys52.

Expressed by the venom duct.

It is found in the secreted. Its function is as follows. Probable neurotoxin. The chain is Conotoxin Cal14.14 from Californiconus californicus (California cone).